The chain runs to 375 residues: Probable dipeptidase PepE (375 aa).

The next 2 membrane-spanning stretches (helical) occupy residues 15–35 (LALA…ITPG) and 55–75 (LVLP…LAAL). Mn(2+)-binding residues include Asp-230, Asp-242, His-306, Glu-335, and Glu-349.

This sequence belongs to the peptidase M24B family. The cofactor is Mn(2+).

Its subcellular location is the cell membrane. This chain is Probable dipeptidase PepE (pepE), found in Mycobacterium bovis (strain ATCC BAA-935 / AF2122/97).